The primary structure comprises 414 residues: Serine hydroxymethyltransferase (414 aa).

(6S)-5,6,7,8-tetrahydrofolate is bound by residues leucine 116 and 120–122; that span reads GHL. At lysine 225 the chain carries N6-(pyridoxal phosphate)lysine. A (6S)-5,6,7,8-tetrahydrofolate-binding site is contributed by 349–351; the sequence is SPF.

The protein belongs to the SHMT family. Homodimer. Requires pyridoxal 5'-phosphate as cofactor.

The protein localises to the cytoplasm. The enzyme catalyses (6R)-5,10-methylene-5,6,7,8-tetrahydrofolate + glycine + H2O = (6S)-5,6,7,8-tetrahydrofolate + L-serine. It functions in the pathway one-carbon metabolism; tetrahydrofolate interconversion. Its pathway is amino-acid biosynthesis; glycine biosynthesis; glycine from L-serine: step 1/1. Its function is as follows. Catalyzes the reversible interconversion of serine and glycine with tetrahydrofolate (THF) serving as the one-carbon carrier. This reaction serves as the major source of one-carbon groups required for the biosynthesis of purines, thymidylate, methionine, and other important biomolecules. Also exhibits THF-independent aldolase activity toward beta-hydroxyamino acids, producing glycine and aldehydes, via a retro-aldol mechanism. This chain is Serine hydroxymethyltransferase, found in Oenococcus oeni (strain ATCC BAA-331 / PSU-1).